The chain runs to 64 residues: DNA-directed RNA polymerase subunit omega (64 aa).

It belongs to the RNA polymerase subunit omega family. The RNAP catalytic core consists of 2 alpha, 1 beta, 1 beta' and 1 omega subunit. When a sigma factor is associated with the core the holoenzyme is formed, which can initiate transcription.

The catalysed reaction is RNA(n) + a ribonucleoside 5'-triphosphate = RNA(n+1) + diphosphate. Promotes RNA polymerase assembly. Latches the N- and C-terminal regions of the beta' subunit thereby facilitating its interaction with the beta and alpha subunits. This chain is DNA-directed RNA polymerase subunit omega, found in Oceanobacillus iheyensis (strain DSM 14371 / CIP 107618 / JCM 11309 / KCTC 3954 / HTE831).